Here is a 231-residue protein sequence, read N- to C-terminus: UPF0758 protein pc1765 (231 aa).

The 123-residue stretch at 107–229 (LIEHSSHAYQ…YVSFKDQNLL (123 aa)) folds into the MPN domain. Residues H178, H180, and D191 each contribute to the Zn(2+) site. A JAMM motif motif is present at residues 178-191 (HNHPSGDPMPSNQD).

This sequence belongs to the UPF0758 family.

The chain is UPF0758 protein pc1765 from Protochlamydia amoebophila (strain UWE25).